A 406-amino-acid polypeptide reads, in one-letter code: Cysteine desulfurase (406 aa).

Position 226 is an N6-(pyridoxal phosphate)lysine (K226). The Cysteine persulfide intermediate role is filled by C364.

It belongs to the class-V pyridoxal-phosphate-dependent aminotransferase family. Csd subfamily. As to quaternary structure, homodimer. Interacts with SufE and the SufBCD complex composed of SufB, SufC and SufD. The interaction with SufE is required to mediate the direct transfer of the sulfur atom from the S-sulfanylcysteine. Pyridoxal 5'-phosphate serves as cofactor.

It localises to the cytoplasm. It catalyses the reaction (sulfur carrier)-H + L-cysteine = (sulfur carrier)-SH + L-alanine. The catalysed reaction is L-selenocysteine + AH2 = hydrogenselenide + L-alanine + A + H(+). It participates in cofactor biosynthesis; iron-sulfur cluster biosynthesis. Cysteine desulfurases mobilize the sulfur from L-cysteine to yield L-alanine, an essential step in sulfur metabolism for biosynthesis of a variety of sulfur-containing biomolecules. Component of the suf operon, which is activated and required under specific conditions such as oxidative stress and iron limitation. Acts as a potent selenocysteine lyase in vitro, that mobilizes selenium from L-selenocysteine. Selenocysteine lyase activity is however unsure in vivo. The sequence is that of Cysteine desulfurase from Salmonella heidelberg (strain SL476).